The chain runs to 393 residues: Pinosylvin synthase (393 aa).

57-60 (KFKR) provides a ligand contact to substrate. The active site involves Cys-167. Residues Leu-270 and 308-310 (GGR) contribute to the substrate site.

The protein belongs to the thiolase-like superfamily. Chalcone/stilbene synthases family. Homodimer.

The protein localises to the cytoplasm. The catalysed reaction is (E)-cinnamoyl-CoA + 3 malonyl-CoA + 3 H(+) = (E)-pinosylvin + 4 CO2 + 4 CoA. It carries out the reaction 3-phenylpropanoyl-CoA + 3 malonyl-CoA + 3 H(+) = dihydropinosylvin + 4 CO2 + 4 CoA. Its pathway is phytoalexin biosynthesis; hydropinosylvin biosynthesis. Catalyzes the production of pinosylvin from cinnamoyl-CoA and malonyl-CoA, and dihydropinosylvin from dihydrocinnamoyl-CoA. This chain is Pinosylvin synthase, found in Pinus sylvestris (Scotch pine).